The following is a 493-amino-acid chain: Na(+)/H(+) antiporter subunit D (493 aa).

The next 15 helical transmembrane spans lie at Asn-3–Thr-23, Ile-31–Val-51, Phe-77–Phe-97, Ser-107–Gly-127, Leu-129–Leu-149, Ile-163–Val-183, Gly-203–Phe-223, Phe-227–Leu-247, Val-251–Thr-271, Leu-274–Ser-294, Ile-299–Thr-319, Leu-330–Leu-350, Gly-370–Val-390, Ile-407–Ile-427, and Leu-449–Val-469.

It belongs to the CPA3 antiporters (TC 2.A.63) subunit D family. In terms of assembly, forms a heterooligomeric complex that consists of seven subunits: MrpA, MrpB, MrpC, MrpD, MrpE, MrpF and MrpG.

It localises to the cell membrane. Mrp complex is a Na(+)/H(+) antiporter that is considered to be the major Na(+) excretion system in B.subtilis. Has a major role in Na(+) resistance and a minor role in Na(+)- and K(+)-dependent pH homeostasis as compared to TetB. MrpA may be the actual Na(+)/H(+) antiporter, although the six other Mrp proteins are all required for Na(+)/H(+) antiport activity and Na(+) resistance. MrpA is required for initiation of sporulation when external Na(+) concentration increases. Also transports Li(+) but not K(+), Ca(2+) or Mg(2+). In Bacillus subtilis (strain 168), this protein is Na(+)/H(+) antiporter subunit D (mrpD).